The sequence spans 396 residues: Probable sugar efflux transporter (396 aa).

The next 12 helical transmembrane spans lie at Val-15–Leu-35, Val-50–Leu-70, Leu-81–Phe-101, Val-103–Ala-123, Ala-136–Ile-156, Thr-169–Pro-189, Pro-209–Tyr-229, Phe-246–Gly-266, Ser-275–Ala-295, Leu-301–Val-321, Val-333–Gly-353, and Ala-364–Phe-384.

The protein belongs to the major facilitator superfamily. SotB (TC 2.A.1.2) family.

Its subcellular location is the cell inner membrane. Its function is as follows. Involved in the efflux of sugars. The physiological role may be the reduction of the intracellular concentration of toxic sugars or sugar metabolites. This is Probable sugar efflux transporter from Salmonella paratyphi C (strain RKS4594).